The sequence spans 240 residues: Extracellular superoxide dismutase [Cu-Zn] (240 aa).

Residues 1–18 (MLALLCSCLLLAAGASDA) form the signal peptide. Intrachain disulfides connect cysteine 63/cysteine 208 and cysteine 125/cysteine 207. Residue asparagine 107 is glycosylated (N-linked (GlcNAc...) asparagine). Cu cation is bound by residues histidine 114, histidine 116, and histidine 131. Zn(2+)-binding residues include histidine 131, histidine 139, histidine 142, and aspartate 145. Residue histidine 181 participates in Cu cation binding. Lysine 229 and lysine 230 each carry an N-linked (Glc) (glycation) lysine; in vitro glycan.

The protein belongs to the Cu-Zn superoxide dismutase family. Homotetramer. Directly interacts with ATP7A; this interaction is copper-dependent and is required for SOD3 activity. It depends on Cu cation as a cofactor. The cofactor is Zn(2+). Expressed in blood vessels, heart, lung, kidney and placenta. Major SOD isoenzyme in extracellular fluids such as plasma, lymph and synovial fluid.

It is found in the secreted. It localises to the extracellular space. The protein localises to the golgi apparatus. The protein resides in the trans-Golgi network. It carries out the reaction 2 superoxide + 2 H(+) = H2O2 + O2. Protect the extracellular space from toxic effect of reactive oxygen intermediates by converting superoxide radicals into hydrogen peroxide and oxygen. The polypeptide is Extracellular superoxide dismutase [Cu-Zn] (SOD3) (Homo sapiens (Human)).